The following is a 64-amino-acid chain: Large ribosomal subunit protein uL30 (64 aa).

The interval 1–22 is disordered; sequence MSEQVKRVRVTQVGSPIGRKPG.

The protein belongs to the universal ribosomal protein uL30 family. Part of the 50S ribosomal subunit.

In Acidiphilium cryptum (strain JF-5), this protein is Large ribosomal subunit protein uL30.